A 218-amino-acid chain; its full sequence is Very-long-chain (3R)-3-hydroxyacyl-CoA dehydratase hpo-8 (218 aa).

Transmembrane regions (helical) follow at residues 15 to 35 (ILGW…GLTW), 44 to 64 (FELK…IVGL), 86 to 106 (ILHL…LVAW), 137 to 157 (LFYV…FASL), and 176 to 196 (MGIS…PGFP). Catalysis depends on residues Y142 and E149.

The protein belongs to the very long-chain fatty acids dehydratase HACD family.

It is found in the membrane. It carries out the reaction a very-long-chain (3R)-3-hydroxyacyl-CoA = a very-long-chain (2E)-enoyl-CoA + H2O. It participates in lipid metabolism; fatty acid biosynthesis. Its function is as follows. Catalyzes the third of the four reactions of the long-chain fatty acids elongation cycle. This endoplasmic reticulum-bound enzymatic process, allows the addition of two carbons to the chain of long- and very long-chain fatty acids/VLCFAs per cycle. This enzyme catalyzes the dehydration of the 3-hydroxyacyl-CoA intermediate into trans-2,3-enoyl-CoA, within each cycle of fatty acid elongation. Thereby, it participates in the production of VLCFAs of different chain lengths that are involved in multiple biological processes as precursors of membrane lipids and lipid mediators. The chain is Very-long-chain (3R)-3-hydroxyacyl-CoA dehydratase hpo-8 (hpo-8) from Caenorhabditis elegans.